Here is a 947-residue protein sequence, read N- to C-terminus: DNA mismatch repair protein MutS 2 (947 aa).

Positions Ile623 to Asp643 are disordered. Gly659–Ser666 is an ATP binding site. A disordered region spans residues Ala841–Glu916.

The protein belongs to the DNA mismatch repair MutS family.

Functionally, this protein is involved in the repair of mismatches in DNA. It is possible that it carries out the mismatch recognition step. This protein has a weak ATPase activity. The sequence is that of DNA mismatch repair protein MutS 2 from Haloarcula marismortui (strain ATCC 43049 / DSM 3752 / JCM 8966 / VKM B-1809) (Halobacterium marismortui).